A 416-amino-acid chain; its full sequence is Histidinol dehydrogenase (416 aa).

Residues tyrosine 117, glutamine 178, and asparagine 201 each contribute to the NAD(+) site. Residues threonine 224, glutamine 246, and histidine 249 each contribute to the substrate site. Positions 246 and 249 each coordinate Zn(2+). Catalysis depends on proton acceptor residues glutamate 314 and histidine 315. Substrate is bound by residues histidine 315, aspartate 348, glutamate 402, and histidine 407. Aspartate 348 is a binding site for Zn(2+). Histidine 407 provides a ligand contact to Zn(2+).

The protein belongs to the histidinol dehydrogenase family. It depends on Zn(2+) as a cofactor.

The enzyme catalyses L-histidinol + 2 NAD(+) + H2O = L-histidine + 2 NADH + 3 H(+). It functions in the pathway amino-acid biosynthesis; L-histidine biosynthesis; L-histidine from 5-phospho-alpha-D-ribose 1-diphosphate: step 9/9. Functionally, catalyzes the sequential NAD-dependent oxidations of L-histidinol to L-histidinaldehyde and then to L-histidine. The chain is Histidinol dehydrogenase from Staphylococcus aureus (strain Mu50 / ATCC 700699).